A 781-amino-acid chain; its full sequence is Penicillin-binding protein 1B (781 aa).

The tract at residues 151 to 322 (FRLAPKLIAM…SLYNPWRNPQ (172 aa)) is transglycosylase. The active-site Proton donor; for transglycosylase activity is the glutamate 188. Positions 415 to 702 (SQLQLKMKNP…ALQIYKDYLN (288 aa)) are transpeptidase. Catalysis depends on serine 466, which acts as the Acyl-ester intermediate; for transpeptidase activity. Residues 749–768 (ETSSPSLTPTTETETPPQES) are compositionally biased toward low complexity. The segment at 749–781 (ETSSPSLTPTTETETPPQESLWDVLDNPNPPAQ) is disordered.

In the N-terminal section; belongs to the glycosyltransferase 51 family. This sequence in the C-terminal section; belongs to the transpeptidase family.

It is found in the cell inner membrane. It catalyses the reaction [GlcNAc-(1-&gt;4)-Mur2Ac(oyl-L-Ala-gamma-D-Glu-L-Lys-D-Ala-D-Ala)](n)-di-trans,octa-cis-undecaprenyl diphosphate + beta-D-GlcNAc-(1-&gt;4)-Mur2Ac(oyl-L-Ala-gamma-D-Glu-L-Lys-D-Ala-D-Ala)-di-trans,octa-cis-undecaprenyl diphosphate = [GlcNAc-(1-&gt;4)-Mur2Ac(oyl-L-Ala-gamma-D-Glu-L-Lys-D-Ala-D-Ala)](n+1)-di-trans,octa-cis-undecaprenyl diphosphate + di-trans,octa-cis-undecaprenyl diphosphate + H(+). It carries out the reaction Preferential cleavage: (Ac)2-L-Lys-D-Ala-|-D-Ala. Also transpeptidation of peptidyl-alanyl moieties that are N-acyl substituents of D-alanine.. Its pathway is cell wall biogenesis; peptidoglycan biosynthesis. In terms of biological role, cell wall formation. Synthesis of cross-linked peptidoglycan from the lipid intermediates. The enzyme has a penicillin-insensitive transglycosylase N-terminal domain (formation of linear glycan strands) and a penicillin-sensitive transpeptidase C-terminal domain (cross-linking of the peptide subunits). The chain is Penicillin-binding protein 1B (mrcB) from Haemophilus influenzae (strain ATCC 51907 / DSM 11121 / KW20 / Rd).